A 105-amino-acid chain; its full sequence is Large ribosomal subunit protein uL23 (105 aa).

Belongs to the universal ribosomal protein uL23 family. As to quaternary structure, part of the 50S ribosomal subunit. Contacts protein L29, and trigger factor when it is bound to the ribosome.

Functionally, one of the early assembly proteins it binds 23S rRNA. One of the proteins that surrounds the polypeptide exit tunnel on the outside of the ribosome. Forms the main docking site for trigger factor binding to the ribosome. In Ureaplasma parvum serovar 3 (strain ATCC 27815 / 27 / NCTC 11736), this protein is Large ribosomal subunit protein uL23.